We begin with the raw amino-acid sequence, 180 residues long: Zinc finger protein 740 (180 aa).

The segment covering 1-11 has biased composition (polar residues); that stretch reads MMLSQIASKQA. The disordered stretch occupies residues 1 to 62; the sequence is MMLSQIASKQ…KEDDSLAEAS (62 aa). Lysine 9 is covalently cross-linked (Glycyl lysine isopeptide (Lys-Gly) (interchain with G-Cter in SUMO2)). The residue at position 19 (serine 19) is a Phosphoserine. Basic and acidic residues predominate over residues 31–56; it reads CKPRFDLSSKGHRKDSDKSRNRKEDD. C2H2-type zinc fingers lie at residues 88 to 110 and 116 to 138; these read FICE…VLIH and FECD…KRVH. A C2H2-type 3; atypical zinc finger spans residues 144–166; sequence YQCERCHQCFSRTDRLLRHKRMC.

The protein belongs to the krueppel C2H2-type zinc-finger protein family.

It localises to the nucleus. May be involved in transcriptional regulation. The chain is Zinc finger protein 740 (Znf740) from Mus musculus (Mouse).